Reading from the N-terminus, the 335-residue chain is Adenine deaminase (335 aa).

3 residues coordinate Zn(2+): His14, His16, and His194. Glu197 functions as the Proton donor in the catalytic mechanism. Zn(2+) is bound at residue Asp275. Residue Asp276 coordinates substrate.

It belongs to the metallo-dependent hydrolases superfamily. Adenosine and AMP deaminases family. Adenine deaminase type 2 subfamily. The cofactor is Zn(2+).

The catalysed reaction is adenine + H2O + H(+) = hypoxanthine + NH4(+). Functionally, catalyzes the hydrolytic deamination of adenine to hypoxanthine. Plays an important role in the purine salvage pathway and in nitrogen catabolism. This Chlorobium phaeobacteroides (strain BS1) protein is Adenine deaminase.